A 1500-amino-acid polypeptide reads, in one-letter code: Carbamoyl-phosphate synthase [ammonia], mitochondrial (1500 aa).

The N-terminal 38 residues, 1 to 38 (MTRILTACKVVKTLKSGFGLANVTSKRQWDFSRPGIRL), are a transit peptide targeting the mitochondrion. The anthranilate phosphoribosyltransferase homolog stretch occupies residues 39 to 218 (LSVKAQTAHI…VKVFGKGNPT (180 aa)). Lysine 55, lysine 57, and lysine 119 each carry N6-acetyllysine; alternate. Lysine 55 carries the N6-glutaryllysine; alternate modification. N6-succinyllysine; alternate occurs at positions 55, 57, and 119. At serine 148 the chain carries Phosphoserine. Lysine 157 and lysine 171 each carry N6-acetyllysine; alternate. N6-succinyllysine; alternate is present on lysine 157. At lysine 171 the chain carries N6-glutaryllysine; alternate. Lysine 176 carries the post-translational modification N6-glutaryllysine. The residue at position 182 (lysine 182) is an N6-acetyllysine. Residue serine 189 is modified to Phosphoserine. Position 197 is an N6-acetyllysine (lysine 197). N6-acetyllysine; alternate is present on residues lysine 207, lysine 210, lysine 214, lysine 219, and lysine 228. N6-glutaryllysine; alternate is present on residues lysine 207, lysine 210, lysine 214, lysine 219, and lysine 228. An N6-succinyllysine; alternate modification is found at lysine 207. Lysine 214 is subject to N6-succinyllysine; alternate. Residues 219-404 (KVVAVDCGIK…FSLIKKGKGT (186 aa)) enclose the Glutamine amidotransferase type-1 domain. Lysine 237 bears the N6-glutaryllysine mark. Lysine 279 carries the N6-acetyllysine modification. Lysine 280, lysine 287, lysine 307, and lysine 310 each carry N6-acetyllysine; alternate. N6-glutaryllysine; alternate is present on lysine 280. N6-succinyllysine; alternate is present on residues lysine 287 and lysine 307. N6-glutaryllysine; alternate is present on residues lysine 307 and lysine 310. Lysine 400 carries the N6-succinyllysine modification. Lysine 402, lysine 412, lysine 453, and lysine 458 each carry N6-glutaryllysine; alternate. N6-succinyllysine; alternate is present on residues lysine 402 and lysine 412. Residues lysine 412, lysine 453, lysine 458, lysine 522, lysine 527, and lysine 532 each carry the N6-acetyllysine; alternate modification. An N6-succinyllysine; alternate mark is found at lysine 458, lysine 522, and lysine 527. Lysine 527 and lysine 532 each carry N6-glutaryllysine; alternate. Serine 537 carries the post-translational modification Phosphoserine; alternate. O-linked (GlcNAc) serine; alternate glycosylation is present at serine 537. Serine 540 carries the phosphoserine modification. The region spanning 551 to 743 (SDKLNEINEK…LAFIAAKIAL (193 aa)) is the ATP-grasp 1 domain. N6-acetyllysine; alternate is present on residues lysine 553 and lysine 560. Lysine 553 carries the N6-glutaryllysine; alternate modification. Residues lysine 553 and lysine 560 each carry the N6-succinyllysine; alternate modification. Position 569 is a phosphoserine (serine 569). N6-acetyllysine; alternate occurs at positions 575, 603, and 612. 3 positions are modified to N6-succinyllysine; alternate: lysine 575, lysine 603, and lysine 612. Lysine 630 bears the N6-acetyllysine mark. Lysine 728 is subject to N6-glutaryllysine. An N6-acetyllysine; alternate mark is found at lysine 751, lysine 757, lysine 772, lysine 793, lysine 811, lysine 831, lysine 841, and lysine 856. Residues lysine 751 and lysine 757 each carry the N6-succinyllysine; alternate modification. An N6-glutaryllysine; alternate mark is found at lysine 757, lysine 772, lysine 793, and lysine 811. Residue lysine 793 is modified to N6-succinyllysine; alternate. Lysine 831 carries the N6-succinyllysine; alternate modification. 2 positions are modified to N6-glutaryllysine; alternate: lysine 841 and lysine 856. Lysine 869 carries the post-translational modification N6-glutaryllysine. An N6-acetyllysine; alternate mark is found at lysine 875, lysine 889, and lysine 892. Lysine 875, lysine 889, and lysine 892 each carry N6-glutaryllysine; alternate. N6-succinyllysine; alternate is present on residues lysine 875, lysine 889, and lysine 892. A phosphoserine mark is found at serine 896 and serine 898. An N6-acetyllysine; alternate mark is found at lysine 908, lysine 915, and lysine 919. An N6-glutaryllysine; alternate mark is found at lysine 908, lysine 915, and lysine 919. N6-succinyllysine; alternate occurs at positions 915 and 919. Lysine 935 bears the N6-acetyllysine mark. At serine 1036 the chain carries Phosphoserine. Residue lysine 1074 is modified to N6-acetyllysine; alternate. The residue at position 1074 (lysine 1074) is an N6-glutaryllysine; alternate. N6-succinyllysine; alternate is present on lysine 1074. 3 positions are modified to phosphoserine: serine 1079, serine 1090, and serine 1093. Residues 1093–1284 (SAVLDELKVA…FIDVATKVMI (192 aa)) enclose the ATP-grasp 2 domain. Lysine 1100 carries the N6-acetyllysine; alternate modification. Lysine 1100 bears the N6-succinyllysine; alternate mark. Lysine 1149 is subject to N6-succinyllysine. N6-acetyllysine; alternate occurs at positions 1168 and 1183. An N6-glutaryllysine; alternate mark is found at lysine 1168 and lysine 1183. 2 positions are modified to N6-succinyllysine; alternate: lysine 1168 and lysine 1183. Serine 1203 carries the post-translational modification Phosphoserine. Lysine 1222 carries the post-translational modification N6-acetyllysine. Lysine 1224 is modified (N6-glutaryllysine). 3 positions are modified to N6-acetyllysine; alternate: lysine 1232, lysine 1269, and lysine 1291. 3 positions are modified to N6-succinyllysine; alternate: lysine 1232, lysine 1269, and lysine 1291. Serine 1331 carries an O-linked (GlcNAc) serine glycan. Threonine 1332 is a glycosylation site (O-linked (GlcNAc) threonine). Positions 1355 to 1500 (FKIPQKGILI…YRQYSAGKAA (146 aa)) constitute an MGS-like domain. Lysine 1356 bears the N6-acetyllysine; alternate mark. N6-glutaryllysine; alternate occurs at positions 1356 and 1360. N6-succinyllysine; alternate occurs at positions 1356 and 1360. Threonine 1391, threonine 1394, and tryptophan 1410 together coordinate N-acetyl-L-glutamate. Serine 1419 and serine 1431 each carry phosphoserine. N-acetyl-L-glutamate-binding residues include asparagine 1437 and asparagine 1440. The residue at position 1444 (lysine 1444) is an N6-acetyllysine; alternate. Lysine 1444 carries the N6-succinyllysine; alternate modification. Asparagine 1449 serves as a coordination point for N-acetyl-L-glutamate. 3 positions are modified to N6-acetyllysine; alternate: lysine 1471, lysine 1479, and lysine 1486. N6-succinyllysine; alternate is present on residues lysine 1471, lysine 1479, and lysine 1486. Residues lysine 1479 and lysine 1486 each carry the N6-glutaryllysine; alternate modification.

In terms of assembly, can form homooligomers (monomers as predominant form and dimers). In terms of processing, 50% of the mature protein that was isolated had Leu-39 as its N-terminal residue and 50% had Ser-40 suggesting two adjacent processing sites. However, the possibility of proteolytic removal of Leu-39 during the isolation of the enzyme cannot be excluded. Undergoes proteolytic cleavage in the C-terminal region corresponding to the loss of approximately 12 AA residues from the C-terminus. Post-translationally, succinylated at Lys-287 and Lys-1291. Desuccinylated at Lys-1291 by SIRT5, leading to activation. Glutarylated. Glutarylation levels increase during fasting. Deglutarylated by SIRT5 at Lys-55, Lys-219, Lys-412, Lys-889, Lys-892, Lys-915, Lys-1360 and Lys-1486, leading to activation. As to expression, primarily in the liver and small intestine.

Its subcellular location is the mitochondrion. The protein localises to the nucleus. It is found in the nucleolus. The protein resides in the cell membrane. It carries out the reaction hydrogencarbonate + NH4(+) + 2 ATP = carbamoyl phosphate + 2 ADP + phosphate + 2 H(+). Its activity is regulated as follows. Requires N-acetyl-L-glutamate (NAG) as an allosteric activator. N-acetyl-L-beta-phenylglutamate (Phe-NAG) can also activate CPSase I, but with an activation constant that is 2-fold higher than that for NAG. Involved in the urea cycle of ureotelic animals where the enzyme plays an important role in removing excess ammonia from the cell. This Rattus norvegicus (Rat) protein is Carbamoyl-phosphate synthase [ammonia], mitochondrial (Cps1).